The chain runs to 945 residues: Oxysterol-binding protein homolog C23H4.01c (945 aa).

Positions 1 to 131 (METVEIRSKS…PKTVTFLLTA (131 aa)) constitute a GOLD domain. In terms of domain architecture, PH spans 149-243 (KQIISGTLLK…WCNALEKAKN (95 aa)). 3 positions are modified to phosphoserine: Ser288, Ser419, and Ser421. Disordered stretches follow at residues 396–555 (ESGA…LPHS) and 846–894 (LEKD…MEEK). Residues 443-454 (TSSISDTSSNSS) show a composition bias toward low complexity. A compositionally biased stretch (polar residues) spans 460–470 (LNATSLASTVD). The span at 482–499 (ESNKENDIKRKQPFHDLM) shows a compositional bias: basic and acidic residues. Position 503 is a phosphoserine (Ser503).

This sequence belongs to the OSBP family.

The protein localises to the cytoplasm. The sequence is that of Oxysterol-binding protein homolog C23H4.01c from Schizosaccharomyces pombe (strain 972 / ATCC 24843) (Fission yeast).